Here is a 378-residue protein sequence, read N- to C-terminus: Lipoyl synthase, mitochondrial (378 aa).

Residues Cys-97, Cys-102, Cys-108, Cys-128, Cys-132, Cys-135, and Ser-343 each contribute to the [4Fe-4S] cluster site. Positions 111–332 (GSDKSAATAT…RQRALDMGFL (222 aa)) constitute a Radical SAM core domain.

It belongs to the radical SAM superfamily. Lipoyl synthase family. The cofactor is [4Fe-4S] cluster.

The protein resides in the mitochondrion. The catalysed reaction is [[Fe-S] cluster scaffold protein carrying a second [4Fe-4S](2+) cluster] + N(6)-octanoyl-L-lysyl-[protein] + 2 oxidized [2Fe-2S]-[ferredoxin] + 2 S-adenosyl-L-methionine + 4 H(+) = [[Fe-S] cluster scaffold protein] + N(6)-[(R)-dihydrolipoyl]-L-lysyl-[protein] + 4 Fe(3+) + 2 hydrogen sulfide + 2 5'-deoxyadenosine + 2 L-methionine + 2 reduced [2Fe-2S]-[ferredoxin]. Its pathway is protein modification; protein lipoylation via endogenous pathway; protein N(6)-(lipoyl)lysine from octanoyl-[acyl-carrier-protein]: step 2/2. In terms of biological role, catalyzes the radical-mediated insertion of two sulfur atoms into the C-6 and C-8 positions of the octanoyl moiety bound to the lipoyl domains of lipoate-dependent enzymes, thereby converting the octanoylated domains into lipoylated derivatives. This Phaeosphaeria nodorum (strain SN15 / ATCC MYA-4574 / FGSC 10173) (Glume blotch fungus) protein is Lipoyl synthase, mitochondrial.